A 658-amino-acid polypeptide reads, in one-letter code: Protein teflon (658 aa).

A C2H2-type 1 zinc finger spans residues 33 to 56; it reads LYCHFCRDLFTQLPEFLRHLQGAH. Disordered regions lie at residues 78–127 and 151–175; these read EQDD…SEQK and HINN…SESN. The span at 100 to 111 shows a compositional bias: basic and acidic residues; the sequence is IPAKSEDSRAID. Over residues 118–127 the composition is skewed to polar residues; that stretch reads DNSPVKSEQK. A C2H2-type 2; degenerate zinc finger spans residues 608 to 630; it reads YFCKCCDDIFTLNEDYTRHLVSQ. A C2H2-type 3 zinc finger spans residues 634–657; it reads YQCTKCIKAFKYRGHFEKHLQNVH.

Belongs to the Teflon family.

The protein localises to the nucleus. It localises to the chromosome. In terms of biological role, specifically required in males for proper segregation of autosomal bivalents at meiosis I. Expression is required in the male germ line prior to spermatocyte stage S4. May have a role as a bridging molecule maintaining adhesion to hold autosome bivalents together via heterochromatic connections. This Drosophila erecta (Fruit fly) protein is Protein teflon.